A 92-amino-acid polypeptide reads, in one-letter code: DNA-directed RNA polymerase subunit omega (92 aa).

Belongs to the RNA polymerase subunit omega family. In terms of assembly, the RNAP catalytic core consists of 2 alpha, 1 beta, 1 beta' and 1 omega subunit. When a sigma factor is associated with the core the holoenzyme is formed, which can initiate transcription.

It catalyses the reaction RNA(n) + a ribonucleoside 5'-triphosphate = RNA(n+1) + diphosphate. Promotes RNA polymerase assembly. Latches the N- and C-terminal regions of the beta' subunit thereby facilitating its interaction with the beta and alpha subunits. This is DNA-directed RNA polymerase subunit omega from Acinetobacter baumannii (strain AB307-0294).